Reading from the N-terminus, the 1072-residue chain is Carbamoyl phosphate synthase large chain (1072 aa).

Residues 1 to 401 are carboxyphosphate synthetic domain; it reads MPKYKDISKV…SLLKAVRSLE (401 aa). Residues R129, R169, G175, G176, K208, L210, E215, G241, V242, H243, Q284, and E298 each coordinate ATP. One can recognise an ATP-grasp 1 domain in the interval 133-327; sequence KRKMQEIGEP…IAKIAAKIAI (195 aa). Positions 284, 298, and 300 each coordinate Mg(2+). Q284, E298, and N300 together coordinate Mn(2+). Residues 402-544 form an oligomerization domain region; the sequence is IKAYGLRLDS…YIYSTYCEED (143 aa). Residues 545 to 929 form a carbamoyl phosphate synthetic domain region; it reads EVETHDIPKV…ALYKALEGAG (385 aa). In terms of domain architecture, ATP-grasp 2 spans 671–861; sequence SKLLKELNIN…MVKLAVEVAL (191 aa). ATP-binding residues include R707, K746, I748, E752, G777, V778, H779, S780, Q820, and E832. Mg(2+)-binding residues include Q820, E832, and N834. 3 residues coordinate Mn(2+): Q820, E832, and N834. The MGS-like domain occupies 930-1072; it reads LKIPKKGKIL…QKDNVKNLVL (143 aa). Residues 930 to 1072 form an allosteric domain region; that stretch reads LKIPKKGKIL…QKDNVKNLVL (143 aa).

The protein belongs to the CarB family. In terms of assembly, composed of two chains; the small (or glutamine) chain promotes the hydrolysis of glutamine to ammonia, which is used by the large (or ammonia) chain to synthesize carbamoyl phosphate. Tetramer of heterodimers (alpha,beta)4. The cofactor is Mg(2+). Mn(2+) is required as a cofactor.

The catalysed reaction is hydrogencarbonate + L-glutamine + 2 ATP + H2O = carbamoyl phosphate + L-glutamate + 2 ADP + phosphate + 2 H(+). The enzyme catalyses hydrogencarbonate + NH4(+) + 2 ATP = carbamoyl phosphate + 2 ADP + phosphate + 2 H(+). It functions in the pathway amino-acid biosynthesis; L-arginine biosynthesis; carbamoyl phosphate from bicarbonate: step 1/1. It participates in pyrimidine metabolism; UMP biosynthesis via de novo pathway; (S)-dihydroorotate from bicarbonate: step 1/3. Functionally, large subunit of the glutamine-dependent carbamoyl phosphate synthetase (CPSase). CPSase catalyzes the formation of carbamoyl phosphate from the ammonia moiety of glutamine, carbonate, and phosphate donated by ATP, constituting the first step of 2 biosynthetic pathways, one leading to arginine and/or urea and the other to pyrimidine nucleotides. The large subunit (synthetase) binds the substrates ammonia (free or transferred from glutamine from the small subunit), hydrogencarbonate and ATP and carries out an ATP-coupled ligase reaction, activating hydrogencarbonate by forming carboxy phosphate which reacts with ammonia to form carbamoyl phosphate. This is Carbamoyl phosphate synthase large chain from Caldanaerobacter subterraneus subsp. tengcongensis (strain DSM 15242 / JCM 11007 / NBRC 100824 / MB4) (Thermoanaerobacter tengcongensis).